Here is a 323-residue protein sequence, read N- to C-terminus: D-alanine--D-alanine ligase (323 aa).

An ATP-grasp domain is found at lysine 102–glutamine 300. Valine 130–threonine 185 lines the ATP pocket. Residues aspartate 254, glutamate 267, and asparagine 269 each contribute to the Mg(2+) site.

This sequence belongs to the D-alanine--D-alanine ligase family. It depends on Mg(2+) as a cofactor. Mn(2+) is required as a cofactor.

It localises to the cytoplasm. The catalysed reaction is 2 D-alanine + ATP = D-alanyl-D-alanine + ADP + phosphate + H(+). It participates in cell wall biogenesis; peptidoglycan biosynthesis. Functionally, cell wall formation. The polypeptide is D-alanine--D-alanine ligase (Synechococcus sp. (strain JA-3-3Ab) (Cyanobacteria bacterium Yellowstone A-Prime)).